A 142-amino-acid polypeptide reads, in one-letter code: MKTFVAKPAEVKRDWYIVDAEGKTLGRMAAEIAARLRGKHKPEYTPHVDCGDYIVVINAEKIAVTGNKRTDKMYHHVTGYVGNLKSTNFETLVGSKPTRPVEFAIKGMLPRGPLGRAMLKKLKVYAGAEHPHAAQQPKELDL.

Belongs to the universal ribosomal protein uL13 family. Part of the 50S ribosomal subunit.

This protein is one of the early assembly proteins of the 50S ribosomal subunit, although it is not seen to bind rRNA by itself. It is important during the early stages of 50S assembly. This is Large ribosomal subunit protein uL13 from Hydrogenovibrio crunogenus (strain DSM 25203 / XCL-2) (Thiomicrospira crunogena).